We begin with the raw amino-acid sequence, 1495 residues long: Terminal uridylyltransferase 7 (1495 aa).

4 disordered regions span residues 1-30 (MGDTAKPYFVKRTKDRGTMDDDDFRRGHPQ), 43-69 (HGSKMEKGLQKKKITPGNYGNTPRKGP), 89-140 (WMND…EDGY), and 162-205 (LETT…PVID). The segment covering 15 to 26 (DRGTMDDDDFRR) has biased composition (basic and acidic residues). A phosphothreonine mark is found at threonine 57 and threonine 64. Basic and acidic residues-rich tracts occupy residues 92–118 (DSHKDQSKRWLSDEHTGNSDNWREFKP) and 128–140 (QRKDSFQENEDGY). Residues serine 132 and serine 172 each carry the phosphoserine modification. The span at 178–187 (QRSRPRKPRK) shows a compositional bias: basic residues. The segment at 244–274 (YTCRLCDVLIESIAFAHKHIKEKRHKKNIKE) adopts a Matrin-type zinc-finger fold. The 50-residue stretch at 551-600 (VGQLWVELLRFYALEFNLADLVISIRVKELVSRELKDWPKKRIAIEDPYS) folds into the PAP-associated 1 domain. Serine 600 is modified (phosphoserine). Residues 734 to 756 (DDYKGDKVYHPETGRKNEKEKVG) show a composition bias toward basic and acidic residues. Disordered regions lie at residues 734-757 (DDYKGDKVYHPETGRKNEKEKVGR) and 831-898 (THSV…EDDE). The span at 831–841 (THSVQGQTSEM) shows a compositional bias: polar residues. 3 stretches are compositionally biased toward acidic residues: residues 843-859 (PSDEEEEDDEEEEEEEE), 868-880 (EDEDGMANEDELD), and 887-898 (GDEDALSEEDDE). At serine 844 the chain carries Phosphoserine. Residues serine 893 and serine 939 each carry the phosphoserine modification. The interval 951–1495 (SKLIFTKGKS…ASAKRTQQES (545 aa)) is sufficient for monouridylation activity. The CCHC-type 1 zinc finger occupies 963–980 (VVCSLCKREGHLKKDCPE). UTP is bound by residues 1047 to 1050 (SSKN), 1057 to 1060 (SDLD), asparagine 1130, lysine 1152, 1170 to 1174 (SYAYT), and histidine 1286. Residues aspartate 1058 and aspartate 1060 each contribute to the Mg(2+) site. Residues 1233–1286 (SVGQLWLGLLRFYTEEFDFKEHVISIRRKSLLTTFKKQWTSKYIVIEDPFDLNH) form the PAP-associated 2 domain. The segment at 1345–1362 (RCCRICGKIGHFMKDCPM) adopts a CCHC-type 2 zinc-finger fold. 2 disordered regions span residues 1367-1424 (RRRR…MRAA) and 1466-1495 (CPQFKGSSGSLSSKYMTQGKASAKRTQQES). Positions 1381–1410 (PENKEKRSKEDKEIHNKYTEREVSTKEDKP) are enriched in basic and acidic residues. The CCHC-type 3 zinc-finger motif lies at 1451–1468 (KRCFICGREGHIKKECPQ). Residues 1470–1485 (KGSSGSLSSKYMTQGK) are compositionally biased toward polar residues.

The protein belongs to the DNA polymerase type-B-like family. As to quaternary structure, interacts with MOV10; the interaction is RNA-dependent. It depends on Mg(2+) as a cofactor. Mn(2+) is required as a cofactor.

It localises to the cytoplasm. It carries out the reaction RNA(n) + UTP = RNA(n)-3'-uridine ribonucleotide + diphosphate. Its function is as follows. Uridylyltransferase that mediates the terminal uridylation of mRNAs with short (less than 25 nucleotides) poly(A) tails, hence facilitating global mRNA decay. Essential for both oocyte maturation and fertility. Through 3' terminal uridylation of mRNA, sculpts, with TUT7, the maternal transcriptome by eliminating transcripts during oocyte growth. Involved in microRNA (miRNA)-induced gene silencing through uridylation of deadenylated miRNA targets. Also functions as an integral regulator of microRNA biogenesiS using 3 different uridylation mechanisms. Acts as a suppressor of miRNA biogenesis by mediating the terminal uridylation of some miRNA precursors, including that of let-7 (pre-let-7). Uridylated pre-let-7 RNA is not processed by Dicer and undergo degradation. Pre-let-7 uridylation is strongly enhanced in the presence of LIN28A. In the absence of LIN28A, TUT7 and TUT4 monouridylate group II pre-miRNAs, which includes most of pre-let7 members, that shapes an optimal 3' end overhang for efficient processing. Add oligo-U tails to truncated pre-miRNAS with a 5' overhang which may promote rapid degradation of non-functional pre-miRNA species. Does not play a role in replication-dependent histone mRNA degradation. Due to functional redundancy between TUT4 and TUT7, the identification of the specific role of each of these proteins is difficult. TUT4 and TUT7 restrict retrotransposition of long interspersed element-1 (LINE-1) in cooperation with MOV10 counteracting the RNA chaperonne activity of L1RE1. TUT7 uridylates LINE-1 mRNAs in the cytoplasm which inhibits initiation of reverse transcription once in the nucleus, whereas uridylation by TUT4 destabilizes mRNAs in cytoplasmic ribonucleoprotein granules. This is Terminal uridylyltransferase 7 from Homo sapiens (Human).